Consider the following 318-residue polypeptide: MDSGETLTFQALILTLQNYWASRGCVVLQPYDMEVGAGTFHTATFLRALTPERWNTAYVQPSRRPTDGRYGDNPNRLQHYYQFQVVLKPNPANIQELYLGSLKAIGIDTLTHDVRFVEDNWESPTLGAWGLGWEVWLNGMEVTQFTYFQQVGGIECFPVTGEITYGLERLAMYIQGVDSVYDLVWADGEFGRVTYGDVFHQNEVEQSAYNFEHADVAKLFELFDFYEEQADKLVAVNLPLPAYEMVLKASHAFNLLDARGAISVTERQRFILRVRTLARKVAISYTEARAKLGFPLADDAHKAEALEKWLPKEPKIIL.

This sequence belongs to the class-II aminoacyl-tRNA synthetase family. As to quaternary structure, tetramer of two alpha and two beta subunits.

It is found in the cytoplasm. The catalysed reaction is tRNA(Gly) + glycine + ATP = glycyl-tRNA(Gly) + AMP + diphosphate. The polypeptide is Glycine--tRNA ligase alpha subunit (glyQ) (Moraxella catarrhalis (Branhamella catarrhalis)).